We begin with the raw amino-acid sequence, 1025 residues long: Multidrug resistance protein MdtC (1025 aa).

12 helical membrane-spanning segments follow: residues 3–23 (FFALFIYRPVATILLSVAITL), 333–353 (EVEQTLIISVALVILVVFLFL), 360–380 (IIPAVAVPVSLIGTFAAMYLC), 387–407 (LSLMALTIATGFVVDDAIVVL), 431–451 (VGFTVLSMSLSLVAVFLPLLL), 463–483 (FAVTLSVAIGISLLVSLTLTP), 528–548 (LVGMVLLGTIALNIWLYISIP), 853–873 (VILIIAAIATVYIVLGILYES), 875–895 (VHPLTILSTLPSAGVGALLAL), 897–917 (LFNAPFSLIALIGIMLLIGIV), 953–973 (PIMMTTLAALFGALPLVLSGG), and 984–1004 (ITIVGGLVMSQLLTLYTTPVV).

This sequence belongs to the resistance-nodulation-cell division (RND) (TC 2.A.6) family. MdtC subfamily. As to quaternary structure, part of a tripartite efflux system composed of MdtA, MdtB and MdtC. MdtC forms a heteromultimer with MdtB.

It localises to the cell inner membrane. The MdtABC tripartite complex confers resistance against novobiocin and deoxycholate. In Escherichia coli O157:H7 (strain EC4115 / EHEC), this protein is Multidrug resistance protein MdtC.